A 1112-amino-acid chain; its full sequence is Electrogenic sodium bicarbonate cotransporter 4 (1112 aa).

Residues 1-13 (MKVEEKAGVKKLE) are compositionally biased toward basic and acidic residues. Disordered regions lie at residues 1–80 (MKVE…SSLG), 220–255 (KKPI…HHST), and 439–469 (GRSG…NEAE). Over 1–513 (MKVEEKAGVK…DFYDGFHIQS (513 aa)) the chain is Cytoplasmic. Composition is skewed to polar residues over residues 53 to 67 (QRVQ…SQQD) and 233 to 244 (SVSTTNRSSARS). Residues 444-465 (SAGGGGSGGGAGGSGAGGGGSG) are compositionally biased toward gly residues. The chain crosses the membrane as a helical span at residues 514–536 (ISAVLFIYLGCITNAITFGGLLG). Residues 537 to 547 (DATDNYQGVME) lie on the Extracellular side of the membrane. The chain crosses the membrane as a helical span at residues 548 to 579 (SFLGTAMAGSLFCLFSGQPLIILSSTGPILIF). The Cytoplasmic segment spans residues 580-598 (EKLLFDFSKANGLDYMEFR). A helical membrane pass occupies residues 599–620 (LWIGLHSAIQCLILVATDASFI). Topologically, residues 621–734 (IKYITRFTEE…LGSSCQFVPD (114 aa)) are extracellular. Residues 735 to 753 (LALMSFILFFGTYSMTLTL) form a helical membrane-spanning segment. Residues 754-772 (KKFKFSRYFPTKVRTLVAD) are Cytoplasmic-facing. The helical transmembrane segment at 773–792 (FSIVFSILLFCGIDACFGLQ) threads the bilayer. Residues 793–820 (TPKLHVPNVIKPTRPDRGWFVAPFGKNP) lie on the Extracellular side of the membrane. The chain crosses the membrane as a helical span at residues 821–839 (WWVYPASILPALLVTILIF). Residues 840-858 (MDQQITAVIVNRKENKLRK) are Cytoplasmic-facing. A helical transmembrane segment spans residues 859 to 875 (AAGYHLDLFWVGILMAL). Residues 876–880 (CSFMG) lie on the Extracellular side of the membrane. A helical membrane pass occupies residues 881–900 (LPWYVAATVISIAHIDSLKM). Over 901–920 (ETETSAPGEQPQFLGVREQR) the chain is Cytoplasmic. Residues 921–940 (VTGVMVFILTGISVFLAPIL) traverse the membrane as a helical segment. The Extracellular segment spans residues 941–945 (KYIPM). A helical membrane pass occupies residues 946 to 966 (PVLYGVFLYMGVASLNGIQFW). Residues 967-992 (DRCKLFLMPAKHQPDHAFLRHVPLRR) lie on the Cytoplasmic side of the membrane. A helical membrane pass occupies residues 993 to 1010 (IHLFTLVQILCLALLWIL). Over 1011-1015 (KSTMA) the chain is Extracellular. Residues 1016 to 1033 (AIIFPVMILGLIIVRRLL) traverse the membrane as a helical segment. Residues 1034–1112 (DLIFSQHDLA…KRSSSWSHSL (79 aa)) are Cytoplasmic-facing. Positions 1055–1074 (KESDRKKRRKEVHENTDKEP) are enriched in basic and acidic residues. The interval 1055–1112 (KESDRKKRRKEVHENTDKEPQFLPPSVVKIPMEGIPSDPQNGIHCVGRKRSSSWSHSL) is disordered.

Belongs to the anion exchanger (TC 2.A.31) family. As to expression, observed in hepatocytes and in the apical region of bile duct intrahepatic cholangiocytes of liver. Also observed in uroepithelium cells lining the outer pelvic wall of the kidney (at protein level). Highly expressed in colon, distal colon, liver, kidney and testis. Moderate expression in duodenum and stomach and weak expression in heart. In kidney, very weakly expressed in the inner medulla, but abundantly expressed in cortex and outer medulla in the medullary thick ascending and cortical thick ascending limbs of the loop of Henle.

Its subcellular location is the basolateral cell membrane. It localises to the apical cell membrane. It carries out the reaction 2 hydrogencarbonate(out) + Na(+)(out) = 2 hydrogencarbonate(in) + Na(+)(in). It catalyses the reaction 3 hydrogencarbonate(out) + Na(+)(out) = 3 hydrogencarbonate(in) + Na(+)(in). Functionally, mediates sodium- and bicarbonate-dependent electrogenic sodium bicarbonate cotransport, with a Na(+):HCO3(-) stoichiometry varying from 1:2 to 1:3. The sequence is that of Electrogenic sodium bicarbonate cotransporter 4 from Rattus norvegicus (Rat).